A 252-amino-acid chain; its full sequence is Short-chain dehydrogenase anuI (252 aa).

NADP(+) is bound by residues leucine 18, aspartate 65, asparagine 92, tyrosine 171, lysine 175, and threonine 206. The Proton acceptor role is filled by tyrosine 171. Catalysis depends on tyrosine 171, which acts as the Proton donor. Residue lysine 175 is the Lowers pKa of active site Tyr of the active site.

Belongs to the short-chain dehydrogenases/reductases (SDR) family.

Its function is as follows. Highly reducing polyketide synthase; part of the gene cluster that mediates the biosynthesis of annullatin D, an alkylated aromatic polyketide with a fused dihydrobenzofuran lactone ring system that exhibits potent agonistic activities toward the cannabinoid receptors. AnuI does not seem to play a role within the pathway. The annullatin backbone 2-hydroxymethyl-3-pentylphenol is assembled from one acetyl-CoA starter unit and 5 malonyl-CoA elongation units by cooperation of the highly reducing polyketide synthase anuA, the short-chain dehydrogenase anuB and the oxidoreductase anuC, before being hydroxylated at the C-5 alkyl chain by the cytochrome P450 monooxygenase anuE to form (8S)-annullatin E. The prenyltransferase anuH subsequently installs one isoprenyl group at the benzene ring to form (8S)-annullatin J. Enzymatic or nonenzymatic dihydro-benzofuran ring formation between the prenyl and the phenolic hydroxyl groups in (8S)-annullatin J results in two diastereomers (2S,9S)-annullatin H and compound 12. The intermediate (2S,9S)-annullatin H is then converted to (2S,9S)-annullatin D by the FAD-linked oxidoreductase anuG-catalyzed five-member lactone ring formation. The isomer 12 acts as a substrate for the short-chain dehydrogenase anuF and is oxidized to (2R)-annullatin F, which is subsequently acetylated by an acetyltransferase leading to (2R)-annullatin G formation. The remaining enzymes identified within the cluster, anuD, anuI and anuJ, seem not to be involved in annullatin biosynthesis. The chain is Short-chain dehydrogenase anuI from Penicillium roqueforti (strain FM164).